The sequence spans 404 residues: Cysteine desulfurase IscS (404 aa).

Residues 75–76 (AT), Asn-155, Gln-183, and 203–205 (SGH) each bind pyridoxal 5'-phosphate. Position 206 is an N6-(pyridoxal phosphate)lysine (Lys-206). Residue Thr-243 coordinates pyridoxal 5'-phosphate. The active-site Cysteine persulfide intermediate is Cys-328. Position 328 (Cys-328) interacts with [2Fe-2S] cluster.

This sequence belongs to the class-V pyridoxal-phosphate-dependent aminotransferase family. NifS/IscS subfamily. Homodimer. Forms a heterotetramer with IscU, interacts with other sulfur acceptors. Pyridoxal 5'-phosphate serves as cofactor.

The protein localises to the cytoplasm. The catalysed reaction is (sulfur carrier)-H + L-cysteine = (sulfur carrier)-SH + L-alanine. Its pathway is cofactor biosynthesis; iron-sulfur cluster biosynthesis. Its function is as follows. Master enzyme that delivers sulfur to a number of partners involved in Fe-S cluster assembly, tRNA modification or cofactor biosynthesis. Catalyzes the removal of elemental sulfur and selenium atoms from cysteine and selenocysteine to produce alanine. Functions as a sulfur delivery protein for Fe-S cluster synthesis onto IscU, an Fe-S scaffold assembly protein, as well as other S acceptor proteins. Also functions as a selenium delivery protein in the pathway for the biosynthesis of selenophosphate. The sequence is that of Cysteine desulfurase IscS from Escherichia coli (strain K12 / DH10B).